The following is a 475-amino-acid chain: UDP-N-acetylmuramate--L-alanine ligase (475 aa).

125-131 (GTHGKTS) lines the ATP pocket.

It belongs to the MurCDEF family.

It is found in the cytoplasm. It catalyses the reaction UDP-N-acetyl-alpha-D-muramate + L-alanine + ATP = UDP-N-acetyl-alpha-D-muramoyl-L-alanine + ADP + phosphate + H(+). The protein operates within cell wall biogenesis; peptidoglycan biosynthesis. In terms of biological role, cell wall formation. The chain is UDP-N-acetylmuramate--L-alanine ligase from Mycolicibacterium gilvum (strain PYR-GCK) (Mycobacterium gilvum (strain PYR-GCK)).